A 109-amino-acid polypeptide reads, in one-letter code: Juvenile hormone esterase, isoform A (109 aa).

It belongs to the type-B carboxylesterase/lipase family. Fat body, the site of their biosynthesis, and the hemolymph where it is secreted.

It carries out the reaction juvenile hormone I + H2O = juvenile hormone I carboxylate + methanol + H(+). It catalyses the reaction juvenile hormone III + H2O = juvenile hormone III carboxylate + methanol + H(+). Functionally, JH esterase plays a crucial role in the decrease of JH activity in lepidopteran insects, by hydrolyzing the methyl ester of JH. It is also involved in the transport of JH. This chain is Juvenile hormone esterase, isoform A, found in Trichoplusia ni (Cabbage looper).